We begin with the raw amino-acid sequence, 233 residues long: MKMKLVTAAIMGLAMSTAMAATDATSLTTDKDKLSYSIGADLGKNFKNQGIDINPDVLAKGMQDGMSGAQLILTEEQMKDVLSKFQKDLMAKRSAEFNKKAEENKAKGDAFLSANKSKPGIVVLPSGLQYKIIDAGTGAKPGKSDTVTVEYTGTLIDGTVFDSTEKAGKPATFQVSQVIPGWTEALQLMPAGSTWEVFVPADLAYGPRSVGGPIGPNETLIFKIHLISVKKAA.

Positions Met-1–Ala-20 are cleaved as a signal peptide. The 90-residue stretch at Ser-144–Ala-233 folds into the PPIase FKBP-type domain.

This sequence belongs to the FKBP-type PPIase family.

The protein resides in the cell outer membrane. It carries out the reaction [protein]-peptidylproline (omega=180) = [protein]-peptidylproline (omega=0). Strongly inhibited by FK506 but is completely resistant to cyclosporin A. In terms of biological role, essential virulence factor associated with macrophage infectivity. Exhibits PPIase activity. The protein is Outer membrane protein MIP (mip) of Legionella longbeachae.